The sequence spans 341 residues: Ketol-acid reductoisomerase (NADP(+)) (341 aa).

The 182-residue stretch at 1–182 folds into the KARI N-terminal Rossmann domain; sequence MATIYYDKDA…GCTRAGVLET (182 aa). NADP(+)-binding positions include 25–28, serine 51, serine 53, and 83–86; these read YGSQ and DQTQ. Histidine 108 is a catalytic residue. Glycine 134 serves as a coordination point for NADP(+). Residues 183–328 form the KARI C-terminal knotted domain; that stretch reads TFKEETETDL…KRLRDMMSWI (146 aa). The Mg(2+) site is built by aspartate 191, glutamate 195, glutamate 227, and glutamate 231. Residue serine 252 coordinates substrate.

The protein belongs to the ketol-acid reductoisomerase family. It depends on Mg(2+) as a cofactor.

The enzyme catalyses (2R)-2,3-dihydroxy-3-methylbutanoate + NADP(+) = (2S)-2-acetolactate + NADPH + H(+). The catalysed reaction is (2R,3R)-2,3-dihydroxy-3-methylpentanoate + NADP(+) = (S)-2-ethyl-2-hydroxy-3-oxobutanoate + NADPH + H(+). It functions in the pathway amino-acid biosynthesis; L-isoleucine biosynthesis; L-isoleucine from 2-oxobutanoate: step 2/4. It participates in amino-acid biosynthesis; L-valine biosynthesis; L-valine from pyruvate: step 2/4. Involved in the biosynthesis of branched-chain amino acids (BCAA). Catalyzes an alkyl-migration followed by a ketol-acid reduction of (S)-2-acetolactate (S2AL) to yield (R)-2,3-dihydroxy-isovalerate. In the isomerase reaction, S2AL is rearranged via a Mg-dependent methyl migration to produce 3-hydroxy-3-methyl-2-ketobutyrate (HMKB). In the reductase reaction, this 2-ketoacid undergoes a metal-dependent reduction by NADPH to yield (R)-2,3-dihydroxy-isovalerate. The polypeptide is Ketol-acid reductoisomerase (NADP(+)) (Anaeromyxobacter dehalogenans (strain 2CP-C)).